A 402-amino-acid polypeptide reads, in one-letter code: 4-hydroxy-3-methylbut-2-enyl diphosphate reductase (402 aa).

A [4Fe-4S] cluster-binding site is contributed by cysteine 66. Residue histidine 96 participates in (2E)-4-hydroxy-3-methylbut-2-enyl diphosphate binding. Histidine 96 contributes to the dimethylallyl diphosphate binding site. Residue histidine 96 participates in isopentenyl diphosphate binding. Cysteine 157 lines the [4Fe-4S] cluster pocket. (2E)-4-hydroxy-3-methylbut-2-enyl diphosphate is bound at residue histidine 185. Histidine 185 contributes to the dimethylallyl diphosphate binding site. Histidine 185 is an isopentenyl diphosphate binding site. Residue glutamate 187 is the Proton donor of the active site. A (2E)-4-hydroxy-3-methylbut-2-enyl diphosphate-binding site is contributed by threonine 250. Cysteine 288 serves as a coordination point for [4Fe-4S] cluster. (2E)-4-hydroxy-3-methylbut-2-enyl diphosphate-binding residues include serine 317, serine 318, asparagine 319, and serine 379. The dimethylallyl diphosphate site is built by serine 317, serine 318, asparagine 319, and serine 379. The isopentenyl diphosphate site is built by serine 317, serine 318, asparagine 319, and serine 379.

The protein belongs to the IspH family. Requires [4Fe-4S] cluster as cofactor.

The enzyme catalyses isopentenyl diphosphate + 2 oxidized [2Fe-2S]-[ferredoxin] + H2O = (2E)-4-hydroxy-3-methylbut-2-enyl diphosphate + 2 reduced [2Fe-2S]-[ferredoxin] + 2 H(+). It catalyses the reaction dimethylallyl diphosphate + 2 oxidized [2Fe-2S]-[ferredoxin] + H2O = (2E)-4-hydroxy-3-methylbut-2-enyl diphosphate + 2 reduced [2Fe-2S]-[ferredoxin] + 2 H(+). It participates in isoprenoid biosynthesis; dimethylallyl diphosphate biosynthesis; dimethylallyl diphosphate from (2E)-4-hydroxy-3-methylbutenyl diphosphate: step 1/1. Its pathway is isoprenoid biosynthesis; isopentenyl diphosphate biosynthesis via DXP pathway; isopentenyl diphosphate from 1-deoxy-D-xylulose 5-phosphate: step 6/6. In terms of biological role, catalyzes the conversion of 1-hydroxy-2-methyl-2-(E)-butenyl 4-diphosphate (HMBPP) into a mixture of isopentenyl diphosphate (IPP) and dimethylallyl diphosphate (DMAPP). Acts in the terminal step of the DOXP/MEP pathway for isoprenoid precursor biosynthesis. The chain is 4-hydroxy-3-methylbut-2-enyl diphosphate reductase from Trichormus variabilis (strain ATCC 29413 / PCC 7937) (Anabaena variabilis).